A 150-amino-acid chain; its full sequence is UPF0178 protein Shewmr4_1560 (150 aa).

Belongs to the UPF0178 family.

The sequence is that of UPF0178 protein Shewmr4_1560 from Shewanella sp. (strain MR-4).